The sequence spans 480 residues: Glycogen synthase (480 aa).

An ADP-alpha-D-glucose-binding site is contributed by K15.

The protein belongs to the glycosyltransferase 1 family. Bacterial/plant glycogen synthase subfamily.

It carries out the reaction [(1-&gt;4)-alpha-D-glucosyl](n) + ADP-alpha-D-glucose = [(1-&gt;4)-alpha-D-glucosyl](n+1) + ADP + H(+). It functions in the pathway glycan biosynthesis; glycogen biosynthesis. In terms of biological role, synthesizes alpha-1,4-glucan chains using ADP-glucose. In Clostridioides difficile (strain 630) (Peptoclostridium difficile), this protein is Glycogen synthase.